The following is a 374-amino-acid chain: Protein RecA (374 aa).

77-84 (GPESSGKT) serves as a coordination point for ATP. The segment at 355–374 (AAKTAAADKSAPAKASEAAA) is disordered.

Belongs to the RecA family.

It localises to the cytoplasm. In terms of biological role, can catalyze the hydrolysis of ATP in the presence of single-stranded DNA, the ATP-dependent uptake of single-stranded DNA by duplex DNA, and the ATP-dependent hybridization of homologous single-stranded DNAs. It interacts with LexA causing its activation and leading to its autocatalytic cleavage. This chain is Protein RecA, found in Synechococcus sp. (strain CC9605).